The chain runs to 301 residues: D-alanine--D-alanine ligase A (301 aa).

Positions 96 to 290 (KKILRYEGVE…YSKLLDMIIE (195 aa)) constitute an ATP-grasp domain. An ATP-binding site is contributed by 123 to 178 (LDKLGFPLVVKPNSGGSSVGVKIVYNKNELISMLETVFEWDSEVVIEKYIKGDEIT). Mg(2+)-binding residues include Asp-245, Glu-257, and Asn-259.

This sequence belongs to the D-alanine--D-alanine ligase family. Requires Mg(2+) as cofactor. Mn(2+) serves as cofactor.

The protein localises to the cytoplasm. The catalysed reaction is 2 D-alanine + ATP = D-alanyl-D-alanine + ADP + phosphate + H(+). Its pathway is cell wall biogenesis; peptidoglycan biosynthesis. Cell wall formation. This Bacillus cereus (strain ATCC 14579 / DSM 31 / CCUG 7414 / JCM 2152 / NBRC 15305 / NCIMB 9373 / NCTC 2599 / NRRL B-3711) protein is D-alanine--D-alanine ligase A.